A 179-amino-acid chain; its full sequence is SCAN domain-containing protein 1 (179 aa).

Residues 1 to 107 (MAATEPILAT…AGSRLGPETF (107 aa)) form a disordered region. A compositionally biased stretch (low complexity) spans 52 to 80 (SPNAAVPEAIPTPRAAASAALELPLGPAP). An SCAN box domain is found at 108 to 166 (RQRFRQFRYQDAAGPREAFRQLRELSRQWLRPDIRTKEQIVEMLVQEQLLAILPEAARA).

As to quaternary structure, interacts with ZNF202.

The protein resides in the nucleus. In terms of biological role, may regulate transcriptional activity. The polypeptide is SCAN domain-containing protein 1 (SCAND1) (Pan paniscus (Pygmy chimpanzee)).